The chain runs to 371 residues: Queuine tRNA-ribosyltransferase (371 aa).

The active-site Proton acceptor is the aspartate 90. Substrate is bound by residues 90-94, aspartate 144, glutamine 189, and glycine 215; that span reads DSGGF. Residues 246–252 are RNA binding; that stretch reads GVGTPEN. The Nucleophile role is filled by aspartate 265. An RNA binding; important for wobble base 34 recognition region spans residues 270–274; that stretch reads TRNAR. Zn(2+) contacts are provided by cysteine 303, cysteine 305, cysteine 308, and histidine 334.

This sequence belongs to the queuine tRNA-ribosyltransferase family. As to quaternary structure, homodimer. Within each dimer, one monomer is responsible for RNA recognition and catalysis, while the other monomer binds to the replacement base PreQ1. Zn(2+) is required as a cofactor.

It carries out the reaction 7-aminomethyl-7-carbaguanine + guanosine(34) in tRNA = 7-aminomethyl-7-carbaguanosine(34) in tRNA + guanine. The protein operates within tRNA modification; tRNA-queuosine biosynthesis. Its function is as follows. Catalyzes the base-exchange of a guanine (G) residue with the queuine precursor 7-aminomethyl-7-deazaguanine (PreQ1) at position 34 (anticodon wobble position) in tRNAs with GU(N) anticodons (tRNA-Asp, -Asn, -His and -Tyr). Catalysis occurs through a double-displacement mechanism. The nucleophile active site attacks the C1' of nucleotide 34 to detach the guanine base from the RNA, forming a covalent enzyme-RNA intermediate. The proton acceptor active site deprotonates the incoming PreQ1, allowing a nucleophilic attack on the C1' of the ribose to form the product. After dissociation, two additional enzymatic reactions on the tRNA convert PreQ1 to queuine (Q), resulting in the hypermodified nucleoside queuosine (7-(((4,5-cis-dihydroxy-2-cyclopenten-1-yl)amino)methyl)-7-deazaguanosine). This is Queuine tRNA-ribosyltransferase from Helicobacter acinonychis (strain Sheeba).